Here is a 209-residue protein sequence, read N- to C-terminus: Regulator of G-protein signaling 1 (209 aa).

Residues 19–42 form a disordered region; that stretch reads FSASPKDSKEHSHSLLDDKKQKKR. Positions 24 to 38 are enriched in basic and acidic residues; the sequence is KDSKEHSHSLLDDKK. The 116-residue stretch at 85–200 folds into the RGS domain; it reads SLEKLLANQT…LKSNIYLNLL (116 aa).

In terms of assembly, interacts with GNAI1 and GNAQ. As to expression, detected in spleen, lymph node and intestine.

The protein resides in the cell membrane. It localises to the cytoplasm. The protein localises to the cytosol. Functionally, regulates G protein-coupled receptor signaling cascades, including signaling downstream of the N-formylpeptide chemoattractant receptors and leukotriene receptors. Inhibits B cell chemotaxis toward CXCL12. Inhibits signal transduction by increasing the GTPase activity of G protein alpha subunits thereby driving them into their inactive GDP-bound form. The sequence is that of Regulator of G-protein signaling 1 (Rgs1) from Mus musculus (Mouse).